The chain runs to 427 residues: Tumor necrosis factor receptor superfamily member 16 (427 aa).

Residues 1–28 form the signal peptide; sequence MGAGATGRAMDGPRLLLLLLLGVSLGGA. At 29-250 the chain is on the extracellular side; the sequence is KEACPTGLYT…PVVTRGTTDN (222 aa). TNFR-Cys repeat units lie at residues 31-64, 66-107, 108-146, and 148-188; these read ACPT…QTVC, PCLD…DAVC, RCAY…NTVC, and ECPD…DAEC. 12 disulfides stabilise this stretch: C32–C43, C44–C57, C47–C64, C67–C83, C86–C99, C89–C107, C109–C122, C125–C138, C128–C146, C149–C164, C167–C180, and C170–C188. N-linked (GlcNAc...) asparagine glycosylation is present at N60. The segment at 194–219 is disordered; the sequence is RWITRSTPPEGSDSTAPSTQEPEAPP. The segment covering 197–214 has biased composition (polar residues); it reads TRSTPPEGSDSTAPSTQE. Residues 251–272 traverse the membrane as a helical segment; sequence LIPVYCSILAAVVVGLVAYIAF. Residues 273–427 lie on the Cytoplasmic side of the membrane; the sequence is KRWNSCKQNK…CSESTATSPV (155 aa). 2 stretches are compositionally biased toward polar residues: residues 281–291 and 305–326; these read NKQGANSRPVN and SGIS…TASG. The disordered stretch occupies residues 281–338; that stretch reads NKQGANSRPVNQTPPPEGEKLHSDSGISVDSQSLHDQQPHTQTASGQALKGDGGLYSS. S311 is subject to Phosphoserine. A mediates interaction with KIDINS220 region spans residues 326 to 341; sequence GQALKGDGGLYSSLPP. One can recognise a Death domain in the interval 344 to 421; sequence REEVEKLLNG…DLVESLCSES (78 aa).

As to quaternary structure, homodimer; disulfide-linked. Heterodimer with SORCS2. The extracellular domains of the heterodimer bind NGF. The cytoplasmic region of the heterodimer binds TRIO. NGF binding mediates dissociation of TRIO from the receptor complex. Interacts with RTN4R. Interacts with TRAF2, TRAF4, TRAF6, PTPN13 and RANBP9. Interacts through TRAF6 with SQSTM1 which bridges NGFR to NTRK1. Interacts with BEX1. Interacts with BEX3. Interacts with KIDINS220 and NTRK1. Can form a ternary complex with NTRK1 and KIDINS220 and this complex is affected by the expression levels of KIDINS220. An increase in KIDINS220 expression leads to a decreased association of NGFR and NTRK1. Interacts with NTRK2; may regulate the ligand specificity of the NTRK2 receptor. Interacts (via death domain) with RAB31. Interacts with LINGO1. Interacts with NRADD. Interacts with MAGED1; the interaction antagonizes the association NGFR:NTRK1. Interacts (via death domain) with ARHGDIA and RIPK2. Interacts with BFAR. N- and O-glycosylated. Post-translationally, O-linked glycans consist of Gal(1-3)GalNAc core elongated by 1 or 2 NeuNAc. In terms of processing, phosphorylated on serine residues.

The protein localises to the cell membrane. It localises to the cytoplasm. It is found in the perikaryon. Its subcellular location is the cell projection. The protein resides in the growth cone. The protein localises to the dendritic spine. Low affinity receptor which can bind to NGF, BDNF, NTF3, and NTF4. Forms a heterodimeric receptor with SORCS2 that binds the precursor forms of NGF, BDNF and NTF3 with high affinity, and has much lower affinity for mature NGF and BDNF. Plays an important role in differentiation and survival of specific neuronal populations during development. Can mediate cell survival as well as cell death of neural cells. Plays a role in the inactivation of RHOA. Plays a role in the regulation of the translocation of GLUT4 to the cell surface in adipocytes and skeletal muscle cells in response to insulin, probably by regulating RAB31 activity, and thereby contributes to the regulation of insulin-dependent glucose uptake. Necessary for the circadian oscillation of the clock genes BMAL1, PER1, PER2 and NR1D1 in the suprachiasmatic nucleus (SCmgetaN) of the brain and in liver and of the genes involved in glucose and lipid metabolism in the liver. Together with BFAR negatively regulates NF-kappa-B and JNK-related signaling pathways. This chain is Tumor necrosis factor receptor superfamily member 16 (NGFR), found in Homo sapiens (Human).